A 209-amino-acid polypeptide reads, in one-letter code: Octanoyltransferase (209 aa).

Positions 30–209 (GEAPEAVYLV…LEVEFIKIFK (180 aa)) constitute a BPL/LPL catalytic domain. Substrate-binding positions include 69 to 76 (RGGKFTFH), 143 to 145 (AIG), and 156 to 158 (GIA). Catalysis depends on C174, which acts as the Acyl-thioester intermediate.

Belongs to the LipB family.

Its subcellular location is the cytoplasm. The enzyme catalyses octanoyl-[ACP] + L-lysyl-[protein] = N(6)-octanoyl-L-lysyl-[protein] + holo-[ACP] + H(+). Its pathway is protein modification; protein lipoylation via endogenous pathway; protein N(6)-(lipoyl)lysine from octanoyl-[acyl-carrier-protein]: step 1/2. In terms of biological role, catalyzes the transfer of endogenously produced octanoic acid from octanoyl-acyl-carrier-protein onto the lipoyl domains of lipoate-dependent enzymes. Lipoyl-ACP can also act as a substrate although octanoyl-ACP is likely to be the physiological substrate. This Rickettsia bellii (strain OSU 85-389) protein is Octanoyltransferase.